We begin with the raw amino-acid sequence, 581 residues long: Invertase (581 aa).

A signal peptide spans 1–22 (MFLKYILASGICLVSLLSSTNA). Residues N37, N40, N46, N57, N62, and N79 are each glycosylated (N-linked (GlcNAc...) asparagine). Substrate is bound by residues 94–97 (FMND), Q113, and 158–159 (FS). D97 is an active-site residue. N168 and N175 each carry an N-linked (GlcNAc...) asparagine glycan. Substrate is bound by residues 227-228 (RD) and E280. The N-linked (GlcNAc...) asparagine glycan is linked to N322. Residue W366 coordinates substrate. N-linked (GlcNAc...) asparagine glycosylation is found at N399, N409, N425, N446, N452, N519, and N569.

This sequence belongs to the glycosyl hydrolase 32 family. Post-translationally, glycosylated; contains 67% carbohydrates. This is composed of equimolar amounts of mannose and galactose. There is also a small amount of glucosamine present.

It catalyses the reaction Hydrolysis of terminal non-reducing beta-D-fructofuranoside residues in beta-D-fructofuranosides.. This Schizosaccharomyces pombe (strain 972 / ATCC 24843) (Fission yeast) protein is Invertase (inv1).